The chain runs to 277 residues: Acetyl-coenzyme A carboxylase carboxyl transferase subunit beta (277 aa).

Residues 25 to 277 (LVRRCPVCHT…DLLRLHKGES (253 aa)) enclose the CoA carboxyltransferase N-terminal domain. The Zn(2+) site is built by Cys29, Cys32, Cys47, and Cys50. Residues 29-50 (CPVCHTTFLTDHWEPTRLCPAC) form a C4-type zinc finger.

The protein belongs to the AccD/PCCB family. Acetyl-CoA carboxylase is a heterohexamer composed of biotin carboxyl carrier protein (AccB), biotin carboxylase (AccC) and two subunits each of ACCase subunit alpha (AccA) and ACCase subunit beta (AccD). Zn(2+) serves as cofactor.

It localises to the cytoplasm. The enzyme catalyses N(6)-carboxybiotinyl-L-lysyl-[protein] + acetyl-CoA = N(6)-biotinyl-L-lysyl-[protein] + malonyl-CoA. It functions in the pathway lipid metabolism; malonyl-CoA biosynthesis; malonyl-CoA from acetyl-CoA: step 1/1. Functionally, component of the acetyl coenzyme A carboxylase (ACC) complex. Biotin carboxylase (BC) catalyzes the carboxylation of biotin on its carrier protein (BCCP) and then the CO(2) group is transferred by the transcarboxylase to acetyl-CoA to form malonyl-CoA. The polypeptide is Acetyl-coenzyme A carboxylase carboxyl transferase subunit beta (Levilactobacillus brevis (strain ATCC 367 / BCRC 12310 / CIP 105137 / JCM 1170 / LMG 11437 / NCIMB 947 / NCTC 947) (Lactobacillus brevis)).